Here is a 660-residue protein sequence, read N- to C-terminus: MDVLVSECSARLLQQEEEIKSLTAEIDRLKNCGCLGASPNLEQLQEENLKLKYRLNILRKSLQAERNKPTKNMINIISRLQEVFGHAIKAAYPDLENPPLLVTPSQQAKFGDYQCNSAMGISQMLKTKEQKVNPREIAENITKHLPDNECIEKVEIAGPGFINVHLRKDFVSEQLTSLLVNGVQLPALGENKKVIVDFSSPNIAKEMHVGHLRSTIIGESISRLFEFAGYDVLRLNHVGDWGTQFGMLIAHLQDKFPDYLTVSPPIGDLQVFYKESKKRFDTEEEFKKRAYQCVVLLQGKNPDITKAWKLICDVSRQELNKIYDALDVSLIERGESFYQDRMNDIVKEFEDRGFVQVDDGRKIVFVPGCSIPLTIVKSDGGYTYDTSDLAAIKQRLFEEKADMIIYVVDNGQSVHFQTIFAAAQMIGWYDPKVTRVFHAGFGVVLGEDKKKFKTRSGETVRLMDLLGEGLKRSMDKLKEKERDKVLTAEELNAAQTSVAYGCIKYADLSHNRLNDYIFSFDKMLDDRGNTAAYLLYAFTRIRSIARLANIDEEMLQKAARETKILLDHEKEWKLGRCILRFPEILQKILDDLFLHTLCDYIYELATAFTEFYDSCYCVEKDRQTGKILKVNMWRMLLCEAVAAVMAKGFDILGIKPVQRM.

Position 1 is an N-acetylmethionine (Met1). Residues 1–72 (MDVLVSECSA…QAERNKPTKN (72 aa)) form a could be involved in the assembly of the multisynthetase complex region. L-arginine is bound by residues 200-202 (SPN), His211, Tyr384, Asp388, and Gln412. The 'HIGH' region motif lies at 201–212 (PNIAKEMHVGHL). The segment at 529–543 (NTAAYLLYAFTRIRS) is interaction with tRNA.

This sequence belongs to the class-I aminoacyl-tRNA synthetase family. Interacts (via N-terminus) with AIMP1 (via N-terminus); this stimulates its catalytic activity. Interacts (via N-terminus) with LARS2 (via C-terminus). Monomer. Part of a multisubunit complex that groups tRNA ligases for Arg (RARS1), Asp (DARS1), Gln (QARS1), Ile (IARS1), Leu (LARS1), Lys (KARS1), Met (MARS1) the bifunctional ligase for Glu and Pro (EPRS1) and the auxiliary subunits AIMP1/p43, AIMP2/p38 and EEF1E1/p18. Interacts with QARS1. Part of a complex composed of RARS1, QARS1 and AIMP1.

The protein localises to the cytoplasm. It is found in the cytosol. The catalysed reaction is tRNA(Arg) + L-arginine + ATP = L-arginyl-tRNA(Arg) + AMP + diphosphate. In terms of biological role, forms part of a macromolecular complex that catalyzes the attachment of specific amino acids to cognate tRNAs during protein synthesis. Modulates the secretion of AIMP1 and may be involved in generation of the inflammatory cytokine EMAP2 from AIMP1. This chain is Arginine--tRNA ligase, cytoplasmic, found in Homo sapiens (Human).